Consider the following 1824-residue polypeptide: E3 ubiquitin-protein ligase UBR1 (1824 aa).

Residues 107-178 (TVCGKVFKNG…KDQYCELHLA (72 aa)) form a UBR-type zinc finger. 2 disordered regions span residues 1006 to 1043 (KQAPSDGRAGPSCSQQGTGGKLSLSAEEQAREERENRA) and 1073 to 1093 (ADTENETRKESASTGPMDWED). The span at 1033–1043 (EQAREERENRA) shows a compositional bias: basic and acidic residues. Residues 1126 to 1220 (FKCILCFENC…VEFQCPYCRT (95 aa)) form an RING-type; atypical zinc finger.

This sequence belongs to the E3 ubiquitin-protein ligase UBR1-like family.

It catalyses the reaction S-ubiquitinyl-[E2 ubiquitin-conjugating enzyme]-L-cysteine + [acceptor protein]-L-lysine = [E2 ubiquitin-conjugating enzyme]-L-cysteine + N(6)-ubiquitinyl-[acceptor protein]-L-lysine.. It participates in protein modification; protein ubiquitination. Functionally, E3 ubiquitin-protein ligase which is a component of the N-end rule pathway. Recognizes and binds to proteins bearing specific N-terminal residues that are destabilizing according to the N-end rule, leading to their ubiquitination and subsequent degradation. This Drosophila melanogaster (Fruit fly) protein is E3 ubiquitin-protein ligase UBR1.